We begin with the raw amino-acid sequence, 487 residues long: Glutamyl-tRNA(Gln) amidotransferase subunit A (487 aa).

Catalysis depends on charge relay system residues K79 and S154. Catalysis depends on S178, which acts as the Acyl-ester intermediate.

Belongs to the amidase family. GatA subfamily. In terms of assembly, heterotrimer of A, B and C subunits.

It carries out the reaction L-glutamyl-tRNA(Gln) + L-glutamine + ATP + H2O = L-glutaminyl-tRNA(Gln) + L-glutamate + ADP + phosphate + H(+). In terms of biological role, allows the formation of correctly charged Gln-tRNA(Gln) through the transamidation of misacylated Glu-tRNA(Gln) in organisms which lack glutaminyl-tRNA synthetase. The reaction takes place in the presence of glutamine and ATP through an activated gamma-phospho-Glu-tRNA(Gln). The sequence is that of Glutamyl-tRNA(Gln) amidotransferase subunit A from Roseiflexus sp. (strain RS-1).